The primary structure comprises 160 residues: Phosphopantetheine adenylyltransferase (160 aa).

S10 lines the substrate pocket. ATP contacts are provided by residues 10-11 and H18; that span reads SF. Substrate is bound by residues K42, L74, and R88. Residues 89-91, E99, and 124-130 each bind ATP; these read GLR and YSFLSSS.

It belongs to the bacterial CoaD family. In terms of assembly, homohexamer. Requires Mg(2+) as cofactor.

The protein localises to the cytoplasm. It catalyses the reaction (R)-4'-phosphopantetheine + ATP + H(+) = 3'-dephospho-CoA + diphosphate. Its pathway is cofactor biosynthesis; coenzyme A biosynthesis; CoA from (R)-pantothenate: step 4/5. Its function is as follows. Reversibly transfers an adenylyl group from ATP to 4'-phosphopantetheine, yielding dephospho-CoA (dPCoA) and pyrophosphate. The chain is Phosphopantetheine adenylyltransferase from Bacillus velezensis (strain DSM 23117 / BGSC 10A6 / LMG 26770 / FZB42) (Bacillus amyloliquefaciens subsp. plantarum).